A 197-amino-acid chain; its full sequence is Peptidyl-tRNA hydrolase (197 aa).

Tyrosine 18 contributes to the tRNA binding site. Histidine 23 serves as the catalytic Proton acceptor. 3 residues coordinate tRNA: phenylalanine 69, asparagine 71, and asparagine 117.

The protein belongs to the PTH family. In terms of assembly, monomer.

It localises to the cytoplasm. The catalysed reaction is an N-acyl-L-alpha-aminoacyl-tRNA + H2O = an N-acyl-L-amino acid + a tRNA + H(+). Its function is as follows. Hydrolyzes ribosome-free peptidyl-tRNAs (with 1 or more amino acids incorporated), which drop off the ribosome during protein synthesis, or as a result of ribosome stalling. Catalyzes the release of premature peptidyl moieties from peptidyl-tRNA molecules trapped in stalled 50S ribosomal subunits, and thus maintains levels of free tRNAs and 50S ribosomes. In Tolumonas auensis (strain DSM 9187 / NBRC 110442 / TA 4), this protein is Peptidyl-tRNA hydrolase.